A 143-amino-acid polypeptide reads, in one-letter code: Ribonuclease HI (143 aa).

In terms of domain architecture, RNase H type-1 spans 1–136 (MQEIEIFCDG…CNSLAKLEAQ (136 aa)). 4 residues coordinate Mg(2+): aspartate 9, glutamate 47, aspartate 69, and asparagine 128.

The protein belongs to the RNase H family. As to quaternary structure, monomer. Mg(2+) is required as a cofactor.

It is found in the cytoplasm. It catalyses the reaction Endonucleolytic cleavage to 5'-phosphomonoester.. Functionally, endonuclease that specifically degrades the RNA of RNA-DNA hybrids. The chain is Ribonuclease HI (rnhA) from Helicobacter pylori (strain J99 / ATCC 700824) (Campylobacter pylori J99).